A 450-amino-acid chain; its full sequence is Molybdate-anion transporter (450 aa).

A run of 12 helical transmembrane segments spans residues 1-21 (MLVTAYLAFVGLLASCLGLEL), 43-63 (LDFYQVYFLALAADWLQAPYL), 79-99 (ILYVCGLASTVLFGLVASSLV), 128-148 (FVLLVGRALGGLSTALLFSAF), 174-194 (AAFWNHVLAVVAGVAAEAVAS), 195-215 (WIGLGPVAPFVAAIPLLALAG), 249-269 (VLLLGTIQALFESVIFIFVFL), 278-298 (GAPLGIIFSSFMAASLLGSSL), 311-331 (PMHLLSLAVLIVVFSLFMLTF), 344-364 (FIAFLLIELACGLYFPSMSFL), 376-396 (GVLNWFRVPLHSLACLGLLVL), and 409-429 (FSICSAVMVMALLAVVGLFTV).

Belongs to the major facilitator superfamily. In terms of tissue distribution, expressed ubiquitously but at relatively higher levels in the olfactory bulb and the skeletal muscle.

The protein resides in the cell membrane. In terms of biological role, mediates high-affinity intracellular uptake of the rare oligo-element molybdenum. The sequence is that of Molybdate-anion transporter (MFSD5) from Homo sapiens (Human).